A 63-amino-acid polypeptide reads, in one-letter code: Conotoxin Cal6.28 (63 aa).

The signal sequence occupies residues 1–22 (MKLTCVLIVAVLILTACQVIAA). Cystine bridges form between C34-C45, C37-C51, and C44-C58.

Belongs to the conotoxin O1 superfamily. As to expression, expressed by the venom duct.

It localises to the secreted. Its function is as follows. Probable neurotoxin. The chain is Conotoxin Cal6.28 from Californiconus californicus (California cone).